The primary structure comprises 534 residues: Probable protein kinase UbiB (534 aa).

Residues Asp-23–Trp-43 form a helical membrane-spanning segment. The Protein kinase domain maps to Arg-125–Leu-492. ATP contacts are provided by residues Leu-131–Val-139 and Lys-153. The Proton acceptor role is filled by Asp-288. 2 consecutive transmembrane segments (helical) span residues Trp-490–Gly-510 and Leu-512–Val-532.

This sequence belongs to the ABC1 family. UbiB subfamily.

Its subcellular location is the cell inner membrane. The protein operates within cofactor biosynthesis; ubiquinone biosynthesis [regulation]. Is probably a protein kinase regulator of UbiI activity which is involved in aerobic coenzyme Q (ubiquinone) biosynthesis. This is Probable protein kinase UbiB from Pseudomonas fluorescens (strain Pf0-1).